A 155-amino-acid chain; its full sequence is DNA-binding protein inhibitor ID-1 (155 aa).

Residues 53 to 105 (LPALLDEQQVNVLLYDMNGCYSRLKELVPTLPQNRKVSKVEILQHVIDYIRDL) enclose the bHLH domain. A Nuclear export signal motif is present at residues 98-111 (VIDYIRDLQLELNS).

As to quaternary structure, heterodimer with other HLH proteins. Interacts with COPS5, IFI204, GATA4 and NKX2-5. Interacts with CLOCK and BMAL1.

The protein localises to the cytoplasm. Its subcellular location is the nucleus. Its function is as follows. Transcriptional regulator (lacking a basic DNA binding domain) which negatively regulates the basic helix-loop-helix (bHLH) transcription factors by forming heterodimers and inhibiting their DNA binding and transcriptional activity. Implicated in regulating a variety of cellular processes, including cellular growth, senescence, differentiation, apoptosis, angiogenesis, and neoplastic transformation. Inhibits skeletal muscle and cardiac myocyte differentiation. Regulates the circadian clock by repressing the transcriptional activator activity of the CLOCK-BMAL1 heterodimer. This chain is DNA-binding protein inhibitor ID-1 (ID1), found in Homo sapiens (Human).